The sequence spans 238 residues: Dephospho-CoA kinase (238 aa).

Residues 3-233 (IIGLTGGVGT…QRPFASPPRA (231 aa)) form the DPCK domain. 11–16 (GTGKST) contributes to the ATP binding site. Disordered stretches follow at residues 110–129 (HGVP…VGFS) and 219–238 (LASA…YSDG).

The protein belongs to the CoaE family.

Its subcellular location is the cytoplasm. The catalysed reaction is 3'-dephospho-CoA + ATP = ADP + CoA + H(+). The protein operates within cofactor biosynthesis; coenzyme A biosynthesis; CoA from (R)-pantothenate: step 5/5. In terms of biological role, catalyzes the phosphorylation of the 3'-hydroxyl group of dephosphocoenzyme A to form coenzyme A. The polypeptide is Dephospho-CoA kinase (Synechococcus sp. (strain JA-2-3B'a(2-13)) (Cyanobacteria bacterium Yellowstone B-Prime)).